Consider the following 109-residue polypeptide: U26-theraphotoxin-Cg1a (109 aa).

The first 18 residues, 1 to 18, serve as a signal peptide directing secretion; the sequence is MNTIIPLLLLSLLITVYA. A propeptide spanning residues 19 to 67 is cleaved from the precursor; sequence YALEDGNKEEIQDIAESEFEASNEMLQLAHLLEADRAETEEDRNSRQKR. 3 disulfide bridges follow: Cys68–Cys83, Cys75–Cys88, and Cys82–Cys103.

Belongs to the neurotoxin 14 (magi-1) family. 07 (Jztx-56) subfamily. Expressed by the venom gland.

The protein localises to the secreted. Probable ion channel inhibitor. The chain is U26-theraphotoxin-Cg1a from Chilobrachys guangxiensis (Chinese earth tiger tarantula).